Consider the following 443-residue polypeptide: Dynein regulatory complex protein 9 (443 aa).

Disordered regions lie at residues 1–34 (MEED…TVEE) and 415–443 (GFKM…GKKK). The IQ domain occupies 393 to 422 (ELKSVIKLQAWWRGTMIRREIGGFKMPKDK). Residues 415-430 (GFKMPKDKVDSKDSKG) show a composition bias toward basic and acidic residues. The segment covering 431–443 (KGKGKDKRRGKKK) has biased composition (basic residues).

This sequence belongs to the DRC9 family. As to quaternary structure, component of the nexin-dynein regulatory complex (N-DRC). Interacts (via IQ domain) with CALM when calcium levels are low. Does not interact with CALM in the presence of Ca(2+). Interacts with the HSP70 proteins HSPA1L and HSPA8. May form a complex with CAMK4 and HSP70.

Its subcellular location is the cytoplasm. It localises to the cell projection. The protein resides in the cilium. It is found in the flagellum. The protein localises to the cytoskeleton. Its subcellular location is the flagellum axoneme. In terms of biological role, component of the nexin-dynein regulatory complex (N-DRC), a key regulator of ciliary/flagellar motility which maintains the alignment and integrity of the distal axoneme and regulates microtubule sliding in motile axonemes. Binds calmodulin when cellular Ca(2+) levels are low and thereby contributes to the regulation of calcium and calmodulin-dependent protein kinase IV (CAMK4) activity; contributes to the regulation of CAMK4 signaling cascades. Required for normal axoneme assembly in sperm flagella, normal sperm tail formation and for male fertility. The polypeptide is Dynein regulatory complex protein 9 (IQCG) (Homo sapiens (Human)).